A 448-amino-acid polypeptide reads, in one-letter code: D-inositol 3-phosphate glycosyltransferase (448 aa).

The segment at 1-21 (MAEQHTGVGRQRGARPWPRPR) is disordered. Residue H29 participates in 1D-myo-inositol 3-phosphate binding. Residues 35–36 (QP) and G43 contribute to the UDP-N-acetyl-alpha-D-glucosamine site. 1D-myo-inositol 3-phosphate-binding positions include 40–45 (DAGGMN), K98, Y131, T155, and R175. R255, K260, and Q321 together coordinate UDP-N-acetyl-alpha-D-glucosamine. Positions 330, 331, and 333 each coordinate Mg(2+). UDP-N-acetyl-alpha-D-glucosamine is bound by residues E343 and E351. T357 serves as a coordination point for Mg(2+).

This sequence belongs to the glycosyltransferase group 1 family. MshA subfamily. As to quaternary structure, homodimer.

The enzyme catalyses 1D-myo-inositol 3-phosphate + UDP-N-acetyl-alpha-D-glucosamine = 1D-myo-inositol 2-acetamido-2-deoxy-alpha-D-glucopyranoside 3-phosphate + UDP + H(+). Functionally, catalyzes the transfer of a N-acetyl-glucosamine moiety to 1D-myo-inositol 3-phosphate to produce 1D-myo-inositol 2-acetamido-2-deoxy-glucopyranoside 3-phosphate in the mycothiol biosynthesis pathway. This is D-inositol 3-phosphate glycosyltransferase from Salinispora arenicola (strain CNS-205).